Consider the following 122-residue polypeptide: Large ribosomal subunit protein uL14 (122 aa).

Belongs to the universal ribosomal protein uL14 family. Part of the 50S ribosomal subunit. Forms a cluster with proteins L3 and L19. In the 70S ribosome, L14 and L19 interact and together make contacts with the 16S rRNA in bridges B5 and B8.

Functionally, binds to 23S rRNA. Forms part of two intersubunit bridges in the 70S ribosome. This is Large ribosomal subunit protein uL14 from Levilactobacillus brevis (strain ATCC 367 / BCRC 12310 / CIP 105137 / JCM 1170 / LMG 11437 / NCIMB 947 / NCTC 947) (Lactobacillus brevis).